Consider the following 209-residue polypeptide: FAS-associated death domain protein (209 aa).

The DED domain occupies 3–81; the sequence is PFLVLLHSVS…RKDLLLRLDD (79 aa). Residues 97–181 form the Death domain; that stretch reads LRAAMEIICD…VVADLIEEDQ (85 aa). The span at 187–200 shows a compositional bias: polar residues; it reads QSGSANPGSFTAWD. The segment at 187-209 is disordered; sequence QSGSANPGSFTAWDSGSAAPGAS.

As to quaternary structure, can self-associate. Component of the AIM2 PANoptosome complex, a multiprotein complex that drives inflammatory cell death (PANoptosis). Component of the death-induced signaling complex (DISC) composed of cell surface receptor FAS/CD95 or TNFRSF1A, adapter protein FADD and the CASP8 protease; recruitment of CASP8 to the complex is required for processing of CASP8 into the p18 and p10 subunits. Interacts (via death domain) with FAS (via death domain). Interacts directly (via DED domain) with NOL3 (via CARD domain); inhibits death-inducing signaling complex (DISC) assembly by inhibiting the increase in FAS-FADD binding induced by FAS activation. Interacts with CFLAR, PEA15 and MBD4. When phosphorylated, part of a complex containing HIPK3 and FAS. May interact with MAVS/IPS1. Interacts with MOCV v-CFLAR protein and PIDD1. Interacts with RIPK1 and TRADD. Interacts with stimulated TNFRSF10B. Interacts with DDX24. Post-translationally, phosphorylated.

It localises to the cytoplasm. Functionally, apoptotic adapter molecule that recruits caspases CASP8 or CASP10 to the activated FAS/CD95 or TNFRSF1A/TNFR-1 receptors. The resulting aggregate called the death-inducing signaling complex (DISC) performs CASP8 proteolytic activation. Active CASP8 initiates the subsequent cascade of caspases mediating apoptosis. Involved in interferon-mediated antiviral immune response, playing a role in the positive regulation of interferon signaling. This is FAS-associated death domain protein from Bos taurus (Bovine).